Consider the following 120-residue polypeptide: uncharacterized protein (120 aa).

Positions 1 to 19 (MKKIVCAVVALLLTLPAWA) are cleaved as a signal peptide.

This is an uncharacterized protein from Salmonella typhimurium (strain LT2 / SGSC1412 / ATCC 700720).